The following is a 722-amino-acid chain: Golgin subfamily A member 5 (722 aa).

The Cytoplasmic portion of the chain corresponds to 1–689 (MSWFTDLAGR…IFLRRYPIAR (689 aa)). Disordered regions lie at residues 90-158 (TRSS…VKPI) and 194-215 (TLSD…SHEL). Positions 91–109 (RSSIESSHNSSVNVSSHRS) are enriched in low complexity. Positions 134 to 148 (DKVHSSSQKETRKES) are enriched in basic and acidic residues. Positions 149–158 (ASVNQAVKPI) are enriched in polar residues. The segment covering 195–209 (LSDSGSSASLSTTGD) has biased composition (low complexity). A coiled-coil region spans residues 211–622 (KSHELSNLRL…LEHQLKNVQG (412 aa)). Residues 690–710 (VFIIIYMALLHLWVMIVLLTY) traverse the membrane as a helical; Anchor for type IV membrane protein segment. The Lumenal segment spans residues 711–722 (TPEMHHDTPSGK).

It is found in the golgi apparatus membrane. Functionally, involved in maintaining Golgi structure. Stimulates the formation of Golgi stacks and ribbons. Involved in intra-Golgi retrograde transport. The sequence is that of Golgin subfamily A member 5 (golga5) from Xenopus laevis (African clawed frog).